The chain runs to 244 residues: Small ribosomal subunit protein uS3 (244 aa).

Positions 38 to 106 (IRKYLNARLA…DIQINIFEVK (69 aa)) constitute a KH type-2 domain. Residues 217–244 (TQSKESGRGNNGGNNGGGKNFKRKKNNR) are disordered. Residues 225–235 (GNNGGNNGGGK) show a composition bias toward gly residues.

This sequence belongs to the universal ribosomal protein uS3 family. As to quaternary structure, part of the 30S ribosomal subunit. Forms a tight complex with proteins S10 and S14.

Binds the lower part of the 30S subunit head. Binds mRNA in the 70S ribosome, positioning it for translation. The protein is Small ribosomal subunit protein uS3 of Bacteroides fragilis (strain ATCC 25285 / DSM 2151 / CCUG 4856 / JCM 11019 / LMG 10263 / NCTC 9343 / Onslow / VPI 2553 / EN-2).